The following is a 351-amino-acid chain: Palmitoyltransferase spe-10 (351 aa).

4 helical membrane passes run 21–43 (TGWI…LWWS), 60–80 (IQAT…MWSL), 198–218 (YFLL…LTSL), and 241–261 (LFSF…LIIF). Residues 154–204 (KYCYECGHIKPDRARHCSSCGKCCIKYDHHCPWINMCVTHVNYKYFLLYII) form the DHHC domain.

Belongs to the DHHC palmitoyltransferase family. Expressed during spermatogenesis in budding and budded spermatids.

It localises to the membrane. The enzyme catalyses L-cysteinyl-[protein] + hexadecanoyl-CoA = S-hexadecanoyl-L-cysteinyl-[protein] + CoA. Involved in spermatogenesis, specifically in the morphogenesis of fibrous body-membranous organelles (FB-MO), which are Golgi-derived organelles used for transporting sperm-specific components, in spermatocytes and in their localization into budding spermatids. Required for the proper formation of spermatids and spermatozoa. The sequence is that of Palmitoyltransferase spe-10 from Caenorhabditis elegans.